A 159-amino-acid chain; its full sequence is Small ribosomal subunit protein uS9 (159 aa).

Belongs to the universal ribosomal protein uS9 family.

This Bradyrhizobium diazoefficiens (strain JCM 10833 / BCRC 13528 / IAM 13628 / NBRC 14792 / USDA 110) protein is Small ribosomal subunit protein uS9.